Consider the following 1174-residue polypeptide: Tight junction protein 2 (1174 aa).

Residues 10-97 (TVTLQKDSKR…IAAIVVKRPR (88 aa)) form the PDZ 1 domain. Phosphoserine occurs at positions 107, 127, 130, 140, 145, 147, 151, 173, 195, and 217. Residues 125–137 (GRSARSGYSERSR) are compositionally biased toward basic and acidic residues. Residues 125–290 (GRSARSGYSE…AGQPDSDRPI (166 aa)) are disordered. Residues 146–214 (RSWEDSPERG…DYGRPGERSH (69 aa)) are compositionally biased toward basic and acidic residues. The span at 220-235 (RGYDRGYDRGYDRGYD) shows a compositional bias: basic and acidic residues. Ser-239 is subject to Phosphoserine. Basic and acidic residues-rich tracts occupy residues 243-266 (EYGR…EHLR) and 274-288 (LRGR…DSDR). Residues 291 to 369 (GVLLMKSKAN…KLQLVVLRDS (79 aa)) form the PDZ 2 domain. Phosphoserine is present on residues Ser-309, Ser-382, Ser-384, Ser-390, Ser-399, Ser-408, Ser-414, and Ser-415. Residues 391 to 430 (EIESNRSFSPEERRQQYSDYDYHSSNEKLKERPNSREDMQ) are disordered. A compositionally biased stretch (basic and acidic residues) spans 399 to 430 (SPEERRQQYSDYDYHSSNEKLKERPNSREDMQ). At Thr-439 the chain carries Phosphothreonine. Positions 456 to 490 (ENSKEPRYQEEPPAPQPKAAPRTFLRPSPEDEAIY) are disordered. Residue Ser-483 is modified to Phosphoserine. In terms of domain architecture, PDZ 3 spans 493–574 (NTKMVRFKKG…GEMVTILAQS (82 aa)). Tyr-558 carries the post-translational modification Phosphotyrosine. An SH3 domain is found at 588 to 653 (GDSFFIRSHF…PNKSRAEQMA (66 aa)). One can recognise a Guanylate kinase-like domain in the interval 679–860 (MKKNLRKSRE…WFGSLKDTIQ (182 aa)). Phosphoserine occurs at positions 686 and 886. A Phosphothreonine modification is found at Thr-889. Phosphoserine is present on residues Ser-897 and Ser-904. Disordered stretches follow at residues 904 to 1065 (SDFE…VLGK) and 1100 to 1174 (DIYA…DTEL). A phosphothreonine mark is found at Thr-909 and Thr-917. Positions 940 to 951 (VQHEESIRKPSP) are enriched in basic and acidic residues. A phosphoserine mark is found at Ser-950, Ser-962, Ser-970, Ser-990, and Ser-1052. Over residues 978–1000 (EPPKAKTQNREESFDISRSHDYK) the composition is skewed to basic and acidic residues. Residues 1044 to 1056 (ESEEVGEGSEEQE) are compositionally biased toward acidic residues. Residue Tyr-1102 is modified to Phosphotyrosine. Ser-1131 and Ser-1143 each carry phosphoserine. Residues 1150–1159 (YRQQLSEHSK) show a composition bias toward basic and acidic residues. An interaction with SCRIB region spans residues 1172–1174 (TEL).

Belongs to the MAGUK family. In terms of assembly, homodimer. Interacts (via PDZ2 domain) with TJP1/ZO1 (via PDZ2 domain). Interacts with UBN1. Interacts with SCRIB. Interacts with OCLN. Interacts with SAFB in the nucleus. Interacts with USP53 (via the C-terminal region). Interacts with claudins, including CLDN1, CLDN2, CLDN3, CLDN5 and CLDN7. Interacts with CLDN18. Interacts (via N-terminus) with CTNNA1. Phosphorylated.

It is found in the cell junction. The protein resides in the adherens junction. Its subcellular location is the cell membrane. It localises to the nucleus. The protein localises to the tight junction. Functionally, plays a role in tight junctions and adherens junctions. Acts as a positive regulator of RANKL-induced osteoclast differentiation, potentially via mediating downstream transcriptional activity. The chain is Tight junction protein 2 from Canis lupus familiaris (Dog).